The primary structure comprises 300 residues: Cation-efflux pump FieF (300 aa).

Transmembrane regions (helical) follow at residues 12–32, 39–59, 82–102, and 114–134; these read AALAATLVATLLLIIKIFAWW, ILAALVDSLVDIAASLTNLLV, AALAQSMFISGSALFLFLTGI, and PLVGIVVTVAALVTTLMLVTF. The Zn(2+) site is built by aspartate 45 and aspartate 49. The Zn(2+) site is built by histidine 153 and aspartate 157. Transmembrane regions (helical) follow at residues 156–176 and 182–202; these read SDVMMNGAILVALALSWYGLH and FALGIGVWILYSALRMGYEAI.

It belongs to the cation diffusion facilitator (CDF) transporter (TC 2.A.4) family. FieF subfamily. In terms of assembly, homodimer.

Its subcellular location is the cell inner membrane. It carries out the reaction Zn(2+)(in) + H(+)(out) = Zn(2+)(out) + H(+)(in). The catalysed reaction is Cd(2+)(in) + H(+)(out) = Cd(2+)(out) + H(+)(in). The enzyme catalyses Fe(2+)(in) + H(+)(out) = Fe(2+)(out) + H(+)(in). Its function is as follows. Divalent metal cation transporter which exports Zn(2+), Cd(2+) and possibly Fe(2+). May be involved in zinc and iron detoxification by efflux. The polypeptide is Cation-efflux pump FieF (Cronobacter sakazakii (strain ATCC BAA-894) (Enterobacter sakazakii)).